A 439-amino-acid polypeptide reads, in one-letter code: Xylose isomerase (439 aa).

Catalysis depends on residues histidine 100 and aspartate 103. Mg(2+) contacts are provided by glutamate 231, glutamate 267, histidine 270, aspartate 295, aspartate 306, aspartate 308, and aspartate 338.

This sequence belongs to the xylose isomerase family. In terms of assembly, homotetramer. It depends on Mg(2+) as a cofactor.

The protein resides in the cytoplasm. It carries out the reaction alpha-D-xylose = alpha-D-xylulofuranose. This is Xylose isomerase from Rhodopirellula baltica (strain DSM 10527 / NCIMB 13988 / SH1).